We begin with the raw amino-acid sequence, 533 residues long: WD repeat-containing protein PAC11 (533 aa).

Positions 1-19 are enriched in basic and acidic residues; the sequence is MERLKQLEEKRRQLKELRE. The disordered stretch occupies residues 1 to 36; it reads MERLKQLEEKRRQLKELRERRKQASLFPGSETMGHH. WD repeat units follow at residues 380–422 and 432–475; these read FDEV…YLSL and NHST…AIIG.

In terms of assembly, interacts with NUM1, when DYN1 is present.

The protein localises to the cytoplasm. The protein resides in the cytoskeleton. Its function is as follows. Required for viability in the absence of the kinesin-related CIN8 mitotic motor. May be a dynein intermediate chain. The chain is WD repeat-containing protein PAC11 (PAC11) from Saccharomyces cerevisiae (strain ATCC 204508 / S288c) (Baker's yeast).